Reading from the N-terminus, the 559-residue chain is Small ribosomal subunit protein uS3m (559 aa).

Residues 113–134 (EGTEEERNEVRGRGAGKRVESI) form a disordered region. Residues 120–134 (NEVRGRGAGKRVESI) are compositionally biased toward basic and acidic residues.

Belongs to the universal ribosomal protein uS3 family.

The protein resides in the mitochondrion. This is Small ribosomal subunit protein uS3m (RPS3) from Zea mays (Maize).